Here is a 101-residue protein sequence, read N- to C-terminus: Citrate lyase acyl carrier protein (101 aa).

Ser-14 carries the O-(phosphoribosyl dephospho-coenzyme A)serine modification.

This sequence belongs to the CitD family. In terms of assembly, oligomer with a subunit composition of (alpha,beta,gamma)6.

It is found in the cytoplasm. Its function is as follows. Covalent carrier of the coenzyme of citrate lyase. The chain is Citrate lyase acyl carrier protein from Streptococcus uberis (strain ATCC BAA-854 / 0140J).